A 185-amino-acid polypeptide reads, in one-letter code: Anaphase-promoting complex subunit 10 (185 aa).

At Thr-2 the chain carries N-acetylthreonine. The DOC domain maps to 2–185; sequence TTPNKTPPGA…IDFMMYRSIR (184 aa). Lys-169 carries the post-translational modification N6-acetyllysine.

The protein belongs to the APC10 family. The mammalian APC/C is composed at least of 14 distinct subunits ANAPC1, ANAPC2, CDC27/APC3, ANAPC4, ANAPC5, CDC16/APC6, ANAPC7, CDC23/APC8, ANAPC10, ANAPC11, CDC26/APC12, ANAPC13, ANAPC15 and ANAPC16 that assemble into a complex of at least 19 chains with a combined molecular mass of around 1.2 MDa; APC/C interacts with FZR1 and FBXO5. The C-terminus of APC10 binds to CDC27/APC3. Interacts with PIWIL1; interaction only takes place when PIWIL1 binds piRNA. Interacts with FBXO43; the interaction is direct.

Its pathway is protein modification; protein ubiquitination. In terms of biological role, component of the anaphase promoting complex/cyclosome (APC/C), a cell cycle-regulated E3 ubiquitin ligase that controls progression through mitosis and the G1 phase of the cell cycle. The APC/C complex acts by mediating ubiquitination and subsequent degradation of target proteins: it mainly mediates the formation of 'Lys-11'-linked polyubiquitin chains and, to a lower extent, the formation of 'Lys-48'- and 'Lys-63'-linked polyubiquitin chains. The APC/C complex catalyzes assembly of branched 'Lys-11'-/'Lys-48'-linked branched ubiquitin chains on target proteins. This chain is Anaphase-promoting complex subunit 10 (Anapc10), found in Mus musculus (Mouse).